A 456-amino-acid chain; its full sequence is ACT domain-containing protein ACR5 (456 aa).

4 consecutive ACT domains span residues 39-115, 130-207, 271-347, and 349-432; these read VIKV…FSPS, VVEL…SSGR, IVMI…VSEG, and KLEL…PSPQ.

As to expression, expressed in stems and siliques.

May bind amino acids. This Arabidopsis thaliana (Mouse-ear cress) protein is ACT domain-containing protein ACR5.